Reading from the N-terminus, the 511-residue chain is Maturase K (511 aa).

It belongs to the intron maturase 2 family. MatK subfamily.

It is found in the plastid. Functionally, usually encoded in the trnK tRNA gene intron. Probably assists in splicing its own and other chloroplast group II introns. The polypeptide is Maturase K (Lathraea clandestina (Purple toothwort)).